The primary structure comprises 181 residues: Glutamyl-tRNA(Gln) amidotransferase subunit C, chloroplastic/mitochondrial (181 aa).

It belongs to the GatC family. Subunit of the heterotrimeric GatCAB amidotransferase (AdT) complex, composed of A, B and C subunits.

The protein localises to the mitochondrion. The protein resides in the plastid. Its subcellular location is the chloroplast. It carries out the reaction L-glutamyl-tRNA(Gln) + L-glutamine + ATP + H2O = L-glutaminyl-tRNA(Gln) + L-glutamate + ADP + phosphate + H(+). Functionally, allows the formation of correctly charged Gln-tRNA(Gln) through the transamidation of misacylated Glu-tRNA(Gln) in chloroplasts and mitochondria. The reaction takes place in the presence of glutamine and ATP through an activated gamma-phospho-Glu-tRNA(Gln). The protein is Glutamyl-tRNA(Gln) amidotransferase subunit C, chloroplastic/mitochondrial of Picea sitchensis (Sitka spruce).